The chain runs to 371 residues: S-adenosylmethionine:tRNA ribosyltransferase-isomerase (371 aa).

This sequence belongs to the QueA family. Monomer.

Its subcellular location is the cytoplasm. It catalyses the reaction 7-aminomethyl-7-carbaguanosine(34) in tRNA + S-adenosyl-L-methionine = epoxyqueuosine(34) in tRNA + adenine + L-methionine + 2 H(+). It participates in tRNA modification; tRNA-queuosine biosynthesis. Its function is as follows. Transfers and isomerizes the ribose moiety from AdoMet to the 7-aminomethyl group of 7-deazaguanine (preQ1-tRNA) to give epoxyqueuosine (oQ-tRNA). The sequence is that of S-adenosylmethionine:tRNA ribosyltransferase-isomerase from Prochlorococcus marinus (strain MIT 9303).